The primary structure comprises 316 residues: MSFASETKKELTNLEMKECCEKAELSALLRMNGSLSFSNRRLSIDIQTENAAIARRIYTLLKKGYDVTVELLVRKKMRLKKNNVYIVRLVEKSREILADLHIVRDDFSFIRNISQELIEKKCCKRSYLRGAFLAGGSVNNPETSSYHLEIFSLYKEHNDAICELMNGFDLNSKTLERRKGYITYLKEAEKITEFLNIIGAHNALLRFEDIRIVRDMRNSVNRLVNCETANLNKTIGAALRQIENIRYIDETVGLDILPDKLQEIAQLRRDYQDVTLKELGEMVSGGKISKSGINHRLRKIDEIAEKLRAGETLVKK.

The segment at residues Thr275–Ala309 is a DNA-binding region (H-T-H motif).

The protein belongs to the WhiA family.

Involved in cell division and chromosome segregation. The protein is Probable cell division protein WhiA of Bacillus cereus (strain B4264).